The primary structure comprises 277 residues: Shikimate dehydrogenase (NADP(+)) (277 aa).

Shikimate-binding positions include 17 to 19 (SRS) and Thr64. The active-site Proton acceptor is Lys68. Shikimate is bound by residues Asn88 and Asp103. NADP(+) contacts are provided by residues 128 to 132 (GAGGS), 152 to 157 (NRTLDR), and Leu217. Tyr219 provides a ligand contact to shikimate. Gly240 provides a ligand contact to NADP(+).

The protein belongs to the shikimate dehydrogenase family. Homodimer.

The enzyme catalyses shikimate + NADP(+) = 3-dehydroshikimate + NADPH + H(+). It functions in the pathway metabolic intermediate biosynthesis; chorismate biosynthesis; chorismate from D-erythrose 4-phosphate and phosphoenolpyruvate: step 4/7. Its function is as follows. Involved in the biosynthesis of the chorismate, which leads to the biosynthesis of aromatic amino acids. Catalyzes the reversible NADPH linked reduction of 3-dehydroshikimate (DHSA) to yield shikimate (SA). This is Shikimate dehydrogenase (NADP(+)) from Rhodopseudomonas palustris (strain BisB18).